The sequence spans 299 residues: tRNA uridine(34) hydroxylase (299 aa).

The Rhodanese domain maps to 132–226 (AGRPVVMLDT…YFEEVGGAHY (95 aa)). The Cysteine persulfide intermediate role is filled by Cys186.

This sequence belongs to the TrhO family.

The catalysed reaction is uridine(34) in tRNA + AH2 + O2 = 5-hydroxyuridine(34) in tRNA + A + H2O. Functionally, catalyzes oxygen-dependent 5-hydroxyuridine (ho5U) modification at position 34 in tRNAs. This Burkholderia mallei (strain NCTC 10247) protein is tRNA uridine(34) hydroxylase.